Here is a 374-residue protein sequence, read N- to C-terminus: MEISYYEILEITQNADKETIKKAYRKMALKYHPDRNQGDKEAEDKFKLVNEAYEVLSNDEKRAIYDRYGKDALKGGGFGSNSSGFGGFEDLGDIFSSFFGESFGSSSRRRKSSNDEKIPSDFIFNLKLSFKEAVFGCKKNIDFTYKCSCKTCNGTGAKDGKLQTCPKCQGRGQVGVSQGFITFAQTCPDCQGSGEKASEKCNDCKGLGYNESKDSVELNIPEGVDTGMKLRVNAKGNILKNNTRGDMYVKIIAAEDDTFIRDDDDIYIEFPVFFTQAILGQSIKVPTIRGEVTLNLPKGAKDGQRFVLEKEGVKDVHSSRIGNQIVQISIKFPTSLNDEQKELLEKLSESFGIKDGMHQEQKGLFEKIANWFKS.

Positions 4 to 69 (SYYEILEITQ…EKRAIYDRYG (66 aa)) constitute a J domain. The CR-type zinc finger occupies 136–213 (GCKKNIDFTY…CKGLGYNESK (78 aa)). Residues cysteine 149, cysteine 152, cysteine 165, cysteine 168, cysteine 187, cysteine 190, cysteine 201, and cysteine 204 each coordinate Zn(2+). CXXCXGXG motif repeat units follow at residues 149–156 (CKTCNGTG), 165–172 (CPKCQGRG), 187–194 (CPDCQGSG), and 201–208 (CNDCKGLG).

The protein belongs to the DnaJ family. In terms of assembly, homodimer. The cofactor is Zn(2+).

The protein localises to the cytoplasm. Functionally, participates actively in the response to hyperosmotic and heat shock by preventing the aggregation of stress-denatured proteins and by disaggregating proteins, also in an autonomous, DnaK-independent fashion. Unfolded proteins bind initially to DnaJ; upon interaction with the DnaJ-bound protein, DnaK hydrolyzes its bound ATP, resulting in the formation of a stable complex. GrpE releases ADP from DnaK; ATP binding to DnaK triggers the release of the substrate protein, thus completing the reaction cycle. Several rounds of ATP-dependent interactions between DnaJ, DnaK and GrpE are required for fully efficient folding. Also involved, together with DnaK and GrpE, in the DNA replication of plasmids through activation of initiation proteins. The sequence is that of Chaperone protein DnaJ from Campylobacter jejuni subsp. doylei (strain ATCC BAA-1458 / RM4099 / 269.97).